Consider the following 380-residue polypeptide: ER-phagy receptor 1 (380 aa).

A J domain is found at 9 to 74 (DCYEILQVNH…DKRKWHEKDY (66 aa)). The C2H2-type zinc-finger motif lies at 270–294 (IMCMVCNKNFRSQNQLENHENSKKH). Residues 307–337 (KHAKEAQKNAESNKQPEDAPSESPYSNKVSS) form a disordered region. Position 344 is a phosphoserine (S344). The AIM signature appears at 352–355 (FTFV). Residues 361 to 367 (EFYTASE) carry the FFAT motif.

In terms of assembly, interacts (via the AIM motif) with atg8. Interacts (via the FFAT motif) with the vesicle-associated membrane protein-associated protein (VAP) family proteins scs2 and scs22.

The protein resides in the endoplasmic reticulum. It localises to the preautophagosomal structure. Reticulophagy receptor required for autophagosomal sequestration of endoplasmic reticulum (ER) membranes during ER stress. Confers resistance to ER stress by promoting the autophagic degradation of the ER (ER-phagy or reticulophagy). Acts as a bridging molecule to mediate the association between atg8 on the autophagic membrane and the vesicle-associated membrane protein-associated proteins (VAPs) scs2 and scs22 on the ER. May play a role in meiosis. This chain is ER-phagy receptor 1, found in Schizosaccharomyces pombe (strain 972 / ATCC 24843) (Fission yeast).